A 283-amino-acid polypeptide reads, in one-letter code: Formamidopyrimidine-DNA glycosylase (283 aa).

Catalysis depends on Pro2, which acts as the Schiff-base intermediate with DNA. The active-site Proton donor is the Glu3. The active-site Proton donor; for beta-elimination activity is Lys58. His100, Arg119, and Lys162 together coordinate DNA. The segment at 247–283 (RVYGREGQRCQTPDCAEKILRKVQSGRSSFYCPACQR) adopts an FPG-type zinc-finger fold. Catalysis depends on Arg273, which acts as the Proton donor; for delta-elimination activity.

Belongs to the FPG family. As to quaternary structure, monomer. Zn(2+) serves as cofactor.

It carries out the reaction Hydrolysis of DNA containing ring-opened 7-methylguanine residues, releasing 2,6-diamino-4-hydroxy-5-(N-methyl)formamidopyrimidine.. The catalysed reaction is 2'-deoxyribonucleotide-(2'-deoxyribose 5'-phosphate)-2'-deoxyribonucleotide-DNA = a 3'-end 2'-deoxyribonucleotide-(2,3-dehydro-2,3-deoxyribose 5'-phosphate)-DNA + a 5'-end 5'-phospho-2'-deoxyribonucleoside-DNA + H(+). In terms of biological role, involved in base excision repair of DNA damaged by oxidation or by mutagenic agents. Acts as a DNA glycosylase that recognizes and removes damaged bases. Has a preference for oxidized purines, such as 7,8-dihydro-8-oxoguanine (8-oxoG). Has AP (apurinic/apyrimidinic) lyase activity and introduces nicks in the DNA strand. Cleaves the DNA backbone by beta-delta elimination to generate a single-strand break at the site of the removed base with both 3'- and 5'-phosphates. In Jannaschia sp. (strain CCS1), this protein is Formamidopyrimidine-DNA glycosylase.